Consider the following 313-residue polypeptide: Aspartate carbamoyltransferase catalytic subunit (313 aa).

Residues arginine 58 and threonine 59 each coordinate carbamoyl phosphate. Lysine 86 contributes to the L-aspartate binding site. Residues arginine 108, histidine 136, and glutamine 139 each contribute to the carbamoyl phosphate site. Residues arginine 169 and arginine 223 each coordinate L-aspartate. The carbamoyl phosphate site is built by glycine 265 and proline 266.

Belongs to the aspartate/ornithine carbamoyltransferase superfamily. ATCase family. As to quaternary structure, heterododecamer (2C3:3R2) of six catalytic PyrB chains organized as two trimers (C3), and six regulatory PyrI chains organized as three dimers (R2).

It catalyses the reaction carbamoyl phosphate + L-aspartate = N-carbamoyl-L-aspartate + phosphate + H(+). It functions in the pathway pyrimidine metabolism; UMP biosynthesis via de novo pathway; (S)-dihydroorotate from bicarbonate: step 2/3. Its function is as follows. Catalyzes the condensation of carbamoyl phosphate and aspartate to form carbamoyl aspartate and inorganic phosphate, the committed step in the de novo pyrimidine nucleotide biosynthesis pathway. The chain is Aspartate carbamoyltransferase catalytic subunit from Anaeromyxobacter dehalogenans (strain 2CP-C).